A 236-amino-acid chain; its full sequence is MTKKEMLYEGKGKKLFKTDDENLLISEFKDDLTAFNAEKRGNESGKGALNCKISTEIFHLLEKNGIKTHLVEIISDTEQVVKKCKIVPIEVIVRNVATGSLTKRLGIKDGTVLPFALVEFCLKDDALGDPFINDEHCLILNLVQNEAQISEIKNMARKINSILTPFFDNKNLRLIDFKIELGLTKDNELVLADEISPDSCRFWDKFSNEKLDKDRFRQDLGNVKMAYEEVLKRILN.

The protein belongs to the SAICAR synthetase family.

The catalysed reaction is 5-amino-1-(5-phospho-D-ribosyl)imidazole-4-carboxylate + L-aspartate + ATP = (2S)-2-[5-amino-1-(5-phospho-beta-D-ribosyl)imidazole-4-carboxamido]succinate + ADP + phosphate + 2 H(+). It participates in purine metabolism; IMP biosynthesis via de novo pathway; 5-amino-1-(5-phospho-D-ribosyl)imidazole-4-carboxamide from 5-amino-1-(5-phospho-D-ribosyl)imidazole-4-carboxylate: step 1/2. The sequence is that of Phosphoribosylaminoimidazole-succinocarboxamide synthase from Campylobacter jejuni subsp. jejuni serotype O:2 (strain ATCC 700819 / NCTC 11168).